Consider the following 321-residue polypeptide: Cytochrome c biogenesis protein CcsA (321 aa).

The next 8 membrane-spanning stretches (helical) occupy residues 17–37 (IVSIVITIHLITLLVDEIVGL), 44–64 (GMISTFLCITGLLVTRWIYSG), 71–91 (LYESLIFLSWSFSIIHMIPYF), 98–118 (LSLVTAPSAIFTQGFATSGLL), 143–163 (MVLSYGALLCGSLLSVALLVI), 225–245 (VISLGFIFLTIGILSGAVWAN), 258–275 (ETWAFITWTIFAIYLHTR), and 286–306 (AIVASIGFIIIWICYFGVNLL).

This sequence belongs to the CcmF/CycK/Ccl1/NrfE/CcsA family. As to quaternary structure, may interact with Ccs1.

The protein localises to the plastid. It localises to the chloroplast thylakoid membrane. In terms of biological role, required during biogenesis of c-type cytochromes (cytochrome c6 and cytochrome f) at the step of heme attachment. This is Cytochrome c biogenesis protein CcsA from Buxus microphylla (Littleleaf boxwood).